A 486-amino-acid polypeptide reads, in one-letter code: Arginine/agmatine antiporter (486 aa).

The next 12 membrane-spanning stretches (helical) occupy residues 12 to 32, 41 to 61, 85 to 105, 132 to 152, 160 to 180, 211 to 231, 242 to 262, 296 to 316, 341 to 361, 367 to 387, 418 to 438, and 461 to 481; these read LGAI…GIFS, AGVG…FFIA, GFGP…QIFG, PAIL…LKGI, IIGT…TAFL, STML…VMSA, ATIL…ILPF, VGLL…VAEI, VSLY…YFST, MLSI…AFLV, IWLI…LLAL, and EVTE…LFST.

It belongs to the amino acid-polyamine-organocation (APC) superfamily. Basic amino acid/polyamine antiporter (APA) (TC 2.A.3.2) family.

It localises to the cell inner membrane. Functionally, catalyzes the exchange of L-arginine for agmatine. The arginine uptake by the bacterium in the macrophage may be a virulence factor against the host innate immune response. The polypeptide is Arginine/agmatine antiporter (aaxC) (Chlamydia abortus (strain DSM 27085 / S26/3) (Chlamydophila abortus)).